The following is a 59-amino-acid chain: Large ribosomal subunit protein bL32 (59 aa).

The interval 1 to 28 is disordered; the sequence is MAVQQNKKSPSKRGMHRAHDFLTDPPLA.

Belongs to the bacterial ribosomal protein bL32 family.

The protein is Large ribosomal subunit protein bL32 of Aromatoleum aromaticum (strain DSM 19018 / LMG 30748 / EbN1) (Azoarcus sp. (strain EbN1)).